The primary structure comprises 276 residues: Cytoskeleton protein RodZ (276 aa).

The Cytoplasmic portion of the chain corresponds to 1-110 (MTSMRKKTIG…SSKKKKKKTS (110 aa)). A helical; Signal-anchor for type II membrane protein membrane pass occupies residues 111–131 (FLPLFYFILFALSILIFVTYY). At 132–276 (VWNYIQTQPE…GQITVTFTKN (145 aa)) the chain is on the extracellular side.

Belongs to the RodZ family. As to quaternary structure, interacts with MltG and MreC in the elongasome. Interacts with KhpB (also called EloR/Jag).

Its subcellular location is the cell membrane. Functionally, cytoskeletal protein that is involved in cell-shape control through regulation of the length of the long axis. Probably part of the elongasome which synthesizes peripheral peptidoglycan. The sequence is that of Cytoskeleton protein RodZ from Streptococcus pneumoniae (strain ATCC BAA-255 / R6).